The primary structure comprises 468 residues: A-type ATP synthase subunit B (468 aa).

It belongs to the ATPase alpha/beta chains family. Has multiple subunits with at least A(3), B(3), C, D, E, F, H, I and proteolipid K(x).

It localises to the cell membrane. Component of the A-type ATP synthase that produces ATP from ADP in the presence of a proton gradient across the membrane. The B chain is a regulatory subunit. The polypeptide is A-type ATP synthase subunit B (Haloferax volcanii (strain ATCC 29605 / DSM 3757 / JCM 8879 / NBRC 14742 / NCIMB 2012 / VKM B-1768 / DS2) (Halobacterium volcanii)).